Consider the following 237-residue polypeptide: B3 domain-containing protein Os06g0194400 (237 aa).

2 disordered regions span residues 1-23 (MIEAESQMAEAASYEEQRRRQVE) and 38-82 (SAAV…LPEK). A DNA-binding region (TF-B3) is located at residues 139 to 230 (FVKPMLQSHV…KFKVYIIRAS (92 aa)).

The protein localises to the nucleus. This is B3 domain-containing protein Os06g0194400 from Oryza sativa subsp. japonica (Rice).